Here is a 260-residue protein sequence, read N- to C-terminus: 3'-5' ssDNA/RNA exonuclease TatD (260 aa).

3 residues coordinate a divalent metal cation: E92, H128, and H153.

This sequence belongs to the metallo-dependent hydrolases superfamily. TatD-type hydrolase family. TatD subfamily. As to quaternary structure, monomer. Mg(2+) serves as cofactor.

Its subcellular location is the cytoplasm. Its function is as follows. 3'-5' exonuclease that prefers single-stranded DNA and RNA. May play a role in the H(2)O(2)-induced DNA damage repair. The chain is 3'-5' ssDNA/RNA exonuclease TatD from Pantoea ananatis (strain LMG 20103).